The primary structure comprises 109 residues: Small ribosomal subunit protein bS6c (109 aa).

This sequence belongs to the bacterial ribosomal protein bS6 family.

The protein resides in the plastid. Its subcellular location is the chloroplast. In terms of biological role, binds together with bS18 to 16S ribosomal RNA. The sequence is that of Small ribosomal subunit protein bS6c from Pyropia yezoensis (Susabi-nori).